A 558-amino-acid chain; its full sequence is Potassium-transporting ATPase potassium-binding subunit (558 aa).

Helical transmembrane passes span 2–22, 66–86, 135–155, 177–197, 253–273, 280–300, 327–347, 354–374, 378–398, 413–433, 482–502, and 528–548; these read LQGFVQIALILAILVATAPLL, VSAALISNLVMGVFVFLILMF, ALGFLMFTSAATGIAVAIAFI, ILLPISLVGAILLLVAGVPET, LLETVIMMVIPAGLIITYGIM, GWLIFWMVFILYGILIAIAAV, FGWVLTALWAVSTTGTMCGAV, LMPPGGFVTLSDLFLQIIWGG, GTAYLFVFLILTVFLTGLMVG, IVLASLILLIHPIAILIPTAI, LSASFSLIAGRYVPIVALIFL, and GITAGAIIILGALTFLPILVL.

It belongs to the KdpA family. As to quaternary structure, the system is composed of three essential subunits: KdpA, KdpB and KdpC.

The protein localises to the cell inner membrane. Its function is as follows. Part of the high-affinity ATP-driven potassium transport (or Kdp) system, which catalyzes the hydrolysis of ATP coupled with the electrogenic transport of potassium into the cytoplasm. This subunit binds the periplasmic potassium ions and delivers the ions to the membrane domain of KdpB through an intramembrane tunnel. This chain is Potassium-transporting ATPase potassium-binding subunit, found in Synechocystis sp. (strain ATCC 27184 / PCC 6803 / Kazusa).